The following is a 97-amino-acid chain: Co-chaperonin GroES (97 aa).

Belongs to the GroES chaperonin family. As to quaternary structure, heptamer of 7 subunits arranged in a ring. Interacts with the chaperonin GroEL.

Its subcellular location is the cytoplasm. Together with the chaperonin GroEL, plays an essential role in assisting protein folding. The GroEL-GroES system forms a nano-cage that allows encapsulation of the non-native substrate proteins and provides a physical environment optimized to promote and accelerate protein folding. GroES binds to the apical surface of the GroEL ring, thereby capping the opening of the GroEL channel. The protein is Co-chaperonin GroES of Stenotrophomonas maltophilia (Pseudomonas maltophilia).